We begin with the raw amino-acid sequence, 536 residues long: CTP synthase (536 aa).

The tract at residues 1–268 (MKSKFIFITG…GKVLCKLFNI (268 aa)) is amidoligase domain. A CTP-binding site is contributed by Ser-14. Ser-14 contacts UTP. 15 to 20 (SLGKGL) contacts ATP. Tyr-55 lines the L-glutamine pocket. Asp-72 contacts ATP. Positions 72 and 142 each coordinate Mg(2+). CTP contacts are provided by residues 149 to 151 (DIE), 189 to 194 (KTKPMQ), and Lys-225. Residues 189–194 (KTKPMQ) and Lys-225 contribute to the UTP site. Positions 293–535 (TIALVGKYVE…IKAAVDNKIN (243 aa)) constitute a Glutamine amidotransferase type-1 domain. L-glutamine is bound at residue Gly-356. The active-site Nucleophile; for glutamine hydrolysis is the Cys-383. Residues 384–387 (LGMQ), Glu-407, and Arg-463 each bind L-glutamine. Catalysis depends on residues His-508 and Glu-510.

Belongs to the CTP synthase family. As to quaternary structure, homotetramer.

It catalyses the reaction UTP + L-glutamine + ATP + H2O = CTP + L-glutamate + ADP + phosphate + 2 H(+). It carries out the reaction L-glutamine + H2O = L-glutamate + NH4(+). The enzyme catalyses UTP + NH4(+) + ATP = CTP + ADP + phosphate + 2 H(+). It participates in pyrimidine metabolism; CTP biosynthesis via de novo pathway; CTP from UDP: step 2/2. With respect to regulation, allosterically activated by GTP, when glutamine is the substrate; GTP has no effect on the reaction when ammonia is the substrate. The allosteric effector GTP functions by stabilizing the protein conformation that binds the tetrahedral intermediate(s) formed during glutamine hydrolysis. Inhibited by the product CTP, via allosteric rather than competitive inhibition. Catalyzes the ATP-dependent amination of UTP to CTP with either L-glutamine or ammonia as the source of nitrogen. Regulates intracellular CTP levels through interactions with the four ribonucleotide triphosphates. The protein is CTP synthase of Treponema denticola (strain ATCC 35405 / DSM 14222 / CIP 103919 / JCM 8153 / KCTC 15104).